We begin with the raw amino-acid sequence, 330 residues long: Ferredoxin--NADP reductase 2 (330 aa).

Residues E37, Q45, Y50, V90, F124, D286, and T327 each coordinate FAD.

This sequence belongs to the ferredoxin--NADP reductase type 2 family. As to quaternary structure, homodimer. It depends on FAD as a cofactor.

It catalyses the reaction 2 reduced [2Fe-2S]-[ferredoxin] + NADP(+) + H(+) = 2 oxidized [2Fe-2S]-[ferredoxin] + NADPH. In Shouchella clausii (strain KSM-K16) (Alkalihalobacillus clausii), this protein is Ferredoxin--NADP reductase 2.